The following is a 64-amino-acid chain: Large ribosomal subunit protein bL28 (64 aa).

It belongs to the bacterial ribosomal protein bL28 family.

This is Large ribosomal subunit protein bL28 from Persephonella marina (strain DSM 14350 / EX-H1).